The sequence spans 306 residues: Cell division protein ZipA (306 aa).

The Periplasmic portion of the chain corresponds to 1 to 6 (MENLQL). The chain crosses the membrane as a helical span at residues 7–27 (VLLLIGAIAIIAVLVHGFWSI). Topologically, residues 28 to 306 (RKQQPKGYKQ…NYIQRIRAQA (279 aa)) are cytoplasmic.

This sequence belongs to the ZipA family. As to quaternary structure, interacts with FtsZ via their C-terminal domains.

It is found in the cell inner membrane. Essential cell division protein that stabilizes the FtsZ protofilaments by cross-linking them and that serves as a cytoplasmic membrane anchor for the Z ring. Also required for the recruitment to the septal ring of downstream cell division proteins. The polypeptide is Cell division protein ZipA (Shewanella halifaxensis (strain HAW-EB4)).